A 418-amino-acid chain; its full sequence is 3-phosphoshikimate 1-carboxyvinyltransferase (418 aa).

3-phosphoshikimate is bound by residues Lys26, Ser27, and Arg31. Residue Lys26 participates in phosphoenolpyruvate binding. Phosphoenolpyruvate is bound by residues Gly97 and Arg125. 3-phosphoshikimate is bound by residues Ser170, Ser171, Gln172, Asp297, Asn320, and Lys324. Gln172 is a binding site for phosphoenolpyruvate. Asp297 serves as the catalytic Proton acceptor. Phosphoenolpyruvate contacts are provided by Arg328, Arg375, and Lys400.

The protein belongs to the EPSP synthase family. Monomer.

It is found in the cytoplasm. The catalysed reaction is 3-phosphoshikimate + phosphoenolpyruvate = 5-O-(1-carboxyvinyl)-3-phosphoshikimate + phosphate. The protein operates within metabolic intermediate biosynthesis; chorismate biosynthesis; chorismate from D-erythrose 4-phosphate and phosphoenolpyruvate: step 6/7. Functionally, catalyzes the transfer of the enolpyruvyl moiety of phosphoenolpyruvate (PEP) to the 5-hydroxyl of shikimate-3-phosphate (S3P) to produce enolpyruvyl shikimate-3-phosphate and inorganic phosphate. In Pseudomonas syringae pv. syringae (strain B728a), this protein is 3-phosphoshikimate 1-carboxyvinyltransferase.